A 92-amino-acid polypeptide reads, in one-letter code: Evasin P942 (92 aa).

The signal sequence occupies residues 1–26; it reads MEVKTFAFLQIAVLIALGLHLAPAGS. Cystine bridges form between cysteine 44–cysteine 63, cysteine 48–cysteine 65, and cysteine 59–cysteine 76. Residue asparagine 47 is glycosylated (N-linked (GlcNAc...) asparagine). Asparagine 70 carries an N-linked (GlcNAc...) asparagine glycan.

The protein resides in the secreted. In terms of biological role, salivary chemokine-binding protein which binds to host chemokines CXCL1, CXCL2, CXCL3, CXCL4, CXCL5, CXCL6, CXCL10, CXCL11 and CXCL13. The chain is Evasin P942 from Ixodes ricinus (Common tick).